The chain runs to 154 residues: Ribonuclease H (154 aa).

The 143-residue stretch at 5 to 147 (GKSRVAIYTD…ADMLARGEVE (143 aa)) folds into the RNase H type-1 domain. 4 residues coordinate Mg(2+): D14, E53, D75, and D139.

The protein belongs to the RNase H family. Monomer. Requires Mg(2+) as cofactor.

It is found in the cytoplasm. The catalysed reaction is Endonucleolytic cleavage to 5'-phosphomonoester.. Functionally, endonuclease that specifically degrades the RNA of RNA-DNA hybrids. The sequence is that of Ribonuclease H from Anaplasma marginale (strain St. Maries).